Here is a 370-residue protein sequence, read N- to C-terminus: 2-aminoethylphosphonate--pyruvate transaminase 2 (370 aa).

Lys-194 carries the N6-(pyridoxal phosphate)lysine modification.

The protein belongs to the class-V pyridoxal-phosphate-dependent aminotransferase family. PhnW subfamily. As to quaternary structure, homodimer. It depends on pyridoxal 5'-phosphate as a cofactor.

It catalyses the reaction (2-aminoethyl)phosphonate + pyruvate = phosphonoacetaldehyde + L-alanine. In terms of biological role, involved in phosphonate degradation. In Paraburkholderia xenovorans (strain LB400), this protein is 2-aminoethylphosphonate--pyruvate transaminase 2.